A 150-amino-acid polypeptide reads, in one-letter code: Ribonuclease K6 (150 aa).

The first 23 residues, 1-23 (MVLCFPLLLLLLVLWGPVCLLHA), serve as a signal peptide directing secretion. Catalysis depends on H38, which acts as the Proton acceptor. 4 disulfide bridges follow: C46–C104, C60–C114, C78–C129, and C85–C92. N-linked (GlcNAc...) asparagine glycosylation is present at N55. Substrate contacts are provided by residues 61–65 (KHQNT) and K86. N-linked (GlcNAc...) asparagine glycosylation is present at N100. R105 serves as a coordination point for substrate. Catalysis depends on H145, which acts as the Proton donor.

The protein belongs to the pancreatic ribonuclease family. As to quaternary structure, interacts (via N-terminus) with bacterial lipopolysaccharide (LPS).

Its subcellular location is the secreted. It localises to the lysosome. It is found in the cytoplasmic granule. Its function is as follows. Ribonuclease which shows a preference for the pyrimidines uridine and cytosine. Has potent antibacterial activity against a range of Gram-positive and Gram-negative bacteria, including P.aeruginosa, A.baumanii, M.luteus, S.aureus, E.faecalis, E.faecium, S.saprophyticus and E.coli. Causes loss of bacterial membrane integrity, and also promotes agglutination of Gram-negative bacteria. Probably contributes to urinary tract sterility. Bactericidal activity is independent of RNase activity. This Miopithecus talapoin (Angolan talapoin) protein is Ribonuclease K6 (RNASE6).